The following is a 105-amino-acid chain: Large ribosomal subunit protein uL23 (105 aa).

The protein belongs to the universal ribosomal protein uL23 family. Part of the 50S ribosomal subunit. Contacts protein L29, and trigger factor when it is bound to the ribosome.

In terms of biological role, one of the early assembly proteins it binds 23S rRNA. One of the proteins that surrounds the polypeptide exit tunnel on the outside of the ribosome. Forms the main docking site for trigger factor binding to the ribosome. This chain is Large ribosomal subunit protein uL23, found in Ureaplasma parvum serovar 3 (strain ATCC 27815 / 27 / NCTC 11736).